A 467-amino-acid polypeptide reads, in one-letter code: Repressible acid phosphatase (467 aa).

The N-terminal stretch at 1–17 is a signal peptide; that stretch reads MFKSVVYSILAASLANA. The active-site Nucleophile is the histidine 75. Asparagine 97, asparagine 103, asparagine 162, asparagine 192, asparagine 250, and asparagine 315 each carry an N-linked (GlcNAc...) asparagine glycan. Aspartate 338 acts as the Proton donor in catalysis. 6 N-linked (GlcNAc...) asparagine glycosylation sites follow: asparagine 356, asparagine 390, asparagine 439, asparagine 445, asparagine 456, and asparagine 461.

It belongs to the histidine acid phosphatase family. Post-translationally, glycosylated during secretion across the membrane.

It is found in the secreted. The enzyme catalyses a phosphate monoester + H2O = an alcohol + phosphate. Partially mediates extracellular nucleotide derived phosphate hydrolysis along with NPP1 and NPP2. This is Repressible acid phosphatase (PHO5) from Saccharomyces cerevisiae (strain ATCC 204508 / S288c) (Baker's yeast).